Reading from the N-terminus, the 436-residue chain is 3-ketoacyl-CoA thiolase (436 aa).

The Acyl-thioester intermediate role is filled by C99. Catalysis depends on proton acceptor residues H392 and C422.

Belongs to the thiolase-like superfamily. Thiolase family. As to quaternary structure, heterotetramer of two alpha chains (FadJ) and two beta chains (FadI).

Its subcellular location is the cytoplasm. The catalysed reaction is an acyl-CoA + acetyl-CoA = a 3-oxoacyl-CoA + CoA. Its pathway is lipid metabolism; fatty acid beta-oxidation. Its function is as follows. Catalyzes the final step of fatty acid oxidation in which acetyl-CoA is released and the CoA ester of a fatty acid two carbons shorter is formed. This chain is 3-ketoacyl-CoA thiolase, found in Shewanella halifaxensis (strain HAW-EB4).